Reading from the N-terminus, the 89-residue chain is Small ribosomal subunit protein uS15 (89 aa).

Belongs to the universal ribosomal protein uS15 family. In terms of assembly, part of the 30S ribosomal subunit. Forms a bridge to the 50S subunit in the 70S ribosome, contacting the 23S rRNA.

Its function is as follows. One of the primary rRNA binding proteins, it binds directly to 16S rRNA where it helps nucleate assembly of the platform of the 30S subunit by binding and bridging several RNA helices of the 16S rRNA. Functionally, forms an intersubunit bridge (bridge B4) with the 23S rRNA of the 50S subunit in the ribosome. The chain is Small ribosomal subunit protein uS15 from Marinobacter nauticus (strain ATCC 700491 / DSM 11845 / VT8) (Marinobacter aquaeolei).